The sequence spans 122 residues: Lectin A (122 aa).

Ca(2+) is bound at residue Y38. An alpha-D-galactoside-binding residues include E44, Q57, and D96. Positions 96, 100, 103, and 104 each coordinate Ca(2+). An an alpha-D-galactoside-binding site is contributed by D103.

The protein belongs to the LecA/PllA lectin family. In terms of assembly, homotetramer.

Functionally, lectin that specifically binds alpha-galactoside-terminating glycoconjugates. Shows high apparent binding to the alpha-Gal epitope (Gal-alpha-1,3-Gal-beta-1,4-GlcNAc terminating glycans) as well as to Gal-alpha-1,4-GlcNAc and Gal-alpha-1,3-GalNAc. Gal-alpha-1,3-GalNAc may be one natural ligand bound by PllA both in the nematode symbiont and in infected insects. This Photorhabdus laumondii subsp. laumondii (strain DSM 15139 / CIP 105565 / TT01) (Photorhabdus luminescens subsp. laumondii) protein is Lectin A.